The chain runs to 457 residues: Beta-1,4-mannosyltransferase egh (457 aa).

6 consecutive transmembrane segments (helical) span residues 8–28 (LLHC…SGGI), 35–55 (FTLV…LYLL), 57–77 (FLTL…VFYN), 346–366 (LLGI…NIIF), 378–398 (VDFV…FGVI), and 415–435 (VLGA…AVIW).

It belongs to the glycosyltransferase 2 family.

The protein localises to the membrane. Functionally, glycosyltransferase with a proposed role in glycosphingolipid biosynthesis. Neurogenic protein implicated in epithelial development. Critical component of a differential oocyte-follicle cell adhesive system. In Drosophila melanogaster (Fruit fly), this protein is Beta-1,4-mannosyltransferase egh (egh).